A 373-amino-acid chain; its full sequence is Galactoside alpha-(1,2)-fucosyltransferase 1 (373 aa).

Residues 1–12 (MWPPSRRQLCLA) are Cytoplasmic-facing. The chain crosses the membrane as a helical; Signal-anchor for type II membrane protein span at residues 13 to 29 (FLLVCALSAFSFLLHLH). Over 30–373 (QDLFRNGLAL…GSWRPWRFLG (344 aa)) the chain is Lumenal. N-linked (GlcNAc...) asparagine glycans are attached at residues N66, N301, and N327.

The protein belongs to the glycosyltransferase 11 family. Brain.

Its subcellular location is the golgi apparatus. It localises to the golgi stack membrane. The enzyme catalyses a beta-D-galactosyl-(1-&gt;4)-N-acetyl-beta-D-glucosaminyl derivative + GDP-beta-L-fucose = an alpha-L-Fuc-(1-&gt;2)-beta-D-Gal-(1-&gt;4)-beta-D-GlcNAc derivative + GDP + H(+). The catalysed reaction is a ganglioside GA1 + GDP-beta-L-fucose = a ganglioside Fuc-GA1 + GDP + H(+). It catalyses the reaction a beta-D-Gal-(1-&gt;3)-beta-D-GlcNAc-(1-&gt;3)-beta-D-Gal-(1-&gt;4)-beta-D-Glc-(1&lt;-&gt;1')-Cer(d18:1(4E)) + GDP-beta-L-fucose = alpha-L-fucosyl-(1-&gt;2)- beta-D-galactosyl-(1-&gt;3)-N-acetyl-beta-D-glucosaminyl-(1-&gt;3)-beta-D-galactosyl-(1-&gt;4)-beta-D-glucosyl-(1&lt;-&gt;1')-N-acylsphing-4-enine + GDP + H(+). It carries out the reaction a neolactoside nLc4Cer(d18:1(4E)) + GDP-beta-L-fucose = a neolactoside IV(2)-alpha-Fuc-nLc4Cer(d18:1(4E)) + GDP + H(+). The enzyme catalyses a ganglioside GM1 + GDP-beta-L-fucose = a ganglioside Fuc-GM1 + GDP + H(+). The catalysed reaction is beta-D-galactosyl-(1-&gt;3)-N-acetyl-D-galactosamine + GDP-beta-L-fucose = alpha-L-fucosyl-(1-&gt;2)-beta-D-galactosyl-(1-&gt;3)-N-acetyl-D-galactosamine + GDP + H(+). It functions in the pathway protein modification; protein glycosylation. Its function is as follows. Catalyzes the transfer of L-fucose, from a guanosine diphosphate-beta-L-fucose, to the terminal galactose residue of glycoconjugates through an alpha(1,2) linkage leading to H antigen synthesis that is an intermediate substrate in the synthesis of ABO blood group antigens. H antigen is essential for maturation of the glomerular layer of the main olfactory bulb, in cell migration and early cell-cell contacts during tumor associated angiogenesis. Preferentially fucosylates soluble lactose and to a lesser extent fucosylates glycolipids gangliosides GA1 and GM1a. The polypeptide is Galactoside alpha-(1,2)-fucosyltransferase 1 (Oryctolagus cuniculus (Rabbit)).